We begin with the raw amino-acid sequence, 240 residues long: MGLELYLDLLSQPCRAVYIFAKKNDIPFELRIVDLIKGQHLSDAFAQVNPLKKVPALKDGDFTLTESVAILLYLTRKYKVPDYWYPQDLQARARVDEYLAWQHTTLRRSCLRALWHKVMFPVFLGEPVSPQTLAATLAELDVTLQLLEDKFLQNKAFLTGPHISLADLVAITELMHPVGAGCQVFEGRPKLATWRQRVEAAVGEDLFQEAHEVILKAKDFPPADPTIKQKLMPWVLAMIR.

Residues 2–82 enclose the GST N-terminal domain; the sequence is GLELYLDLLS…YLTRKYKVPD (81 aa). Glutathione-binding positions include histidine 40, 53–54, and 66–67; these read KV and ES. The region spanning 88-220 is the GST C-terminal domain; the sequence is DLQARARVDE…HEVILKAKDF (133 aa).

It belongs to the GST superfamily. Theta family. As to quaternary structure, homodimer. Found in erythrocyte. Expressed at low levels in liver. In lung, expressed at low levels in club cells and ciliated cells at the alveolar/bronchiolar junction. Absent from epithelial cells of larger bronchioles.

It localises to the cytoplasm. It carries out the reaction RX + glutathione = an S-substituted glutathione + a halide anion + H(+). Functionally, conjugation of reduced glutathione to a wide number of exogenous and endogenous hydrophobic electrophiles. Acts on 1,2-epoxy-3-(4-nitrophenoxy)propane, phenethylisothiocyanate 4-nitrobenzyl chloride and 4-nitrophenethyl bromide. Displays glutathione peroxidase activity with cumene hydroperoxide. The protein is Glutathione S-transferase theta-1 (GSTT1) of Homo sapiens (Human).